The sequence spans 425 residues: Polyadenylate-binding protein RBP47B' (425 aa).

RRM domains are found at residues 24–102 (RTLW…LNWA), 116–195 (HSIF…AATP), and 237–309 (TTIS…WSKN).

It belongs to the polyadenylate-binding RBP47 family. Interacts with the poly(A) tail of mRNA in nucleus.

It is found in the nucleus. The protein localises to the cytoplasmic granule. Functionally, heterogeneous nuclear ribonucleoprotein (hnRNP)-protein binding the poly(A) tail of mRNA and probably involved in some steps of pre-mRNA maturation. This chain is Polyadenylate-binding protein RBP47B' (RBP47B'), found in Arabidopsis thaliana (Mouse-ear cress).